The sequence spans 410 residues: UPF0761 membrane protein Csal_1895 (410 aa).

6 helical membrane-spanning segments follow: residues 43–63 (LFAV…IPSF), 99–119 (SLTL…MVTV), 139–159 (FLLY…GFLL), 180–200 (VAFL…FIYM), 212–232 (AVAG…AFSL), and 247–267 (FAAV…VLVG).

Belongs to the UPF0761 family.

The protein localises to the cell inner membrane. This is UPF0761 membrane protein Csal_1895 from Chromohalobacter salexigens (strain ATCC BAA-138 / DSM 3043 / CIP 106854 / NCIMB 13768 / 1H11).